A 245-amino-acid polypeptide reads, in one-letter code: 8-amino-3,8-dideoxy-manno-octulosonate cytidylyltransferase (245 aa).

It belongs to the KdsB family.

The protein localises to the cytoplasm. The catalysed reaction is 8-amino-3,8-dideoxy-alpha-D-manno-octulosonate + CTP = CMP-8-amino-3,8-dideoxy-alpha-D-manno-oct-2-ulosonate + diphosphate. It functions in the pathway bacterial outer membrane biogenesis; lipopolysaccharide biosynthesis. Functionally, activates KDO8N (a required 8-carbon sugar) for incorporation into bacterial lipopolysaccharide in the Shewanella genus. This is 8-amino-3,8-dideoxy-manno-octulosonate cytidylyltransferase from Shewanella baltica (strain OS185).